A 206-amino-acid chain; its full sequence is Small ribosomal subunit protein uS4 (206 aa).

Residues 96–156 (GRLDNVVYRM…EKAKKQSRVK (61 aa)) form the S4 RNA-binding domain.

This sequence belongs to the universal ribosomal protein uS4 family. Part of the 30S ribosomal subunit. Contacts protein S5. The interaction surface between S4 and S5 is involved in control of translational fidelity.

Functionally, one of the primary rRNA binding proteins, it binds directly to 16S rRNA where it nucleates assembly of the body of the 30S subunit. In terms of biological role, with S5 and S12 plays an important role in translational accuracy. The polypeptide is Small ribosomal subunit protein uS4 (Enterobacter sp. (strain 638)).